Here is a 106-residue protein sequence, read N- to C-terminus: Large ribosomal subunit protein eL42 (106 aa).

The protein belongs to the eukaryotic ribosomal protein eL42 family.

The sequence is that of Large ribosomal subunit protein eL42 (RPL44) from Wickerhamomyces ciferrii (strain ATCC 14091 / BCRC 22168 / CBS 111 / JCM 3599 / NBRC 0793 / NRRL Y-1031 F-60-10) (Yeast).